The following is an 873-amino-acid chain: Alanine--tRNA ligase (873 aa).

4 residues coordinate Zn(2+): His-562, His-566, Cys-664, and His-668.

This sequence belongs to the class-II aminoacyl-tRNA synthetase family. Zn(2+) is required as a cofactor.

The protein resides in the cytoplasm. It carries out the reaction tRNA(Ala) + L-alanine + ATP = L-alanyl-tRNA(Ala) + AMP + diphosphate. Functionally, catalyzes the attachment of alanine to tRNA(Ala) in a two-step reaction: alanine is first activated by ATP to form Ala-AMP and then transferred to the acceptor end of tRNA(Ala). Also edits incorrectly charged Ser-tRNA(Ala) and Gly-tRNA(Ala) via its editing domain. The sequence is that of Alanine--tRNA ligase from Shewanella amazonensis (strain ATCC BAA-1098 / SB2B).